The sequence spans 137 residues: NADH-ubiquinone oxidoreductase chain 3 (137 aa).

3 helical membrane-spanning segments follow: residues 6–26 (LFIL…LIFA), 57–77 (FFIF…TFPF), and 86–106 (IYGL…FVYE).

The protein belongs to the complex I subunit 3 family.

The protein localises to the mitochondrion membrane. It carries out the reaction a ubiquinone + NADH + 5 H(+)(in) = a ubiquinol + NAD(+) + 4 H(+)(out). Functionally, core subunit of the mitochondrial membrane respiratory chain NADH dehydrogenase (Complex I) that is believed to belong to the minimal assembly required for catalysis. Complex I functions in the transfer of electrons from NADH to the respiratory chain. The immediate electron acceptor for the enzyme is believed to be ubiquinone. This is NADH-ubiquinone oxidoreductase chain 3 (ND3) from Podospora anserina (strain S / ATCC MYA-4624 / DSM 980 / FGSC 10383) (Pleurage anserina).